The sequence spans 229 residues: 3-isopropylmalate dehydratase small subunit (229 aa).

The segment at 198 to 229 is disordered; that stretch reads LPVKREPEQPIESAREGEYPDWQGPLADRGII. A compositionally biased stretch (basic and acidic residues) spans 200-215; the sequence is VKREPEQPIESAREGE.

Belongs to the LeuD family. LeuD type 1 subfamily. In terms of assembly, heterodimer of LeuC and LeuD.

It catalyses the reaction (2R,3S)-3-isopropylmalate = (2S)-2-isopropylmalate. It participates in amino-acid biosynthesis; L-leucine biosynthesis; L-leucine from 3-methyl-2-oxobutanoate: step 2/4. Functionally, catalyzes the isomerization between 2-isopropylmalate and 3-isopropylmalate, via the formation of 2-isopropylmaleate. The protein is 3-isopropylmalate dehydratase small subunit of Bifidobacterium adolescentis (strain ATCC 15703 / DSM 20083 / NCTC 11814 / E194a).